Here is a 311-residue protein sequence, read N- to C-terminus: Methionyl-tRNA formyltransferase (311 aa).

A (6S)-5,6,7,8-tetrahydrofolate-binding site is contributed by 109–112; the sequence is SLLP.

Belongs to the Fmt family.

It carries out the reaction L-methionyl-tRNA(fMet) + (6R)-10-formyltetrahydrofolate = N-formyl-L-methionyl-tRNA(fMet) + (6S)-5,6,7,8-tetrahydrofolate + H(+). Its function is as follows. Attaches a formyl group to the free amino group of methionyl-tRNA(fMet). The formyl group appears to play a dual role in the initiator identity of N-formylmethionyl-tRNA by promoting its recognition by IF2 and preventing the misappropriation of this tRNA by the elongation apparatus. The chain is Methionyl-tRNA formyltransferase from Staphylococcus aureus (strain bovine RF122 / ET3-1).